Reading from the N-terminus, the 408-residue chain is DNA primase DnaG (408 aa).

The region spanning 172 to 248 (DSIIIVEGRA…HVDYIARAPP (77 aa)) is the Toprim domain. Mg(2+) is bound by residues Glu-178, Asp-222, and Asp-224. A disordered region spans residues 279–304 (AAGEKAETPQQPPPQQPVPQQEVREE).

It belongs to the archaeal DnaG primase family. In terms of assembly, forms a ternary complex with MCM helicase and DNA. Component of the archaeal exosome complex. Requires Mg(2+) as cofactor.

The catalysed reaction is ssDNA + n NTP = ssDNA/pppN(pN)n-1 hybrid + (n-1) diphosphate.. RNA polymerase that catalyzes the synthesis of short RNA molecules used as primers for DNA polymerase during DNA replication. Also part of the exosome, which is a complex involved in RNA degradation. Acts as a poly(A)-binding protein that enhances the interaction between heteromeric, adenine-rich transcripts and the exosome. This Pyrobaculum aerophilum (strain ATCC 51768 / DSM 7523 / JCM 9630 / CIP 104966 / NBRC 100827 / IM2) protein is DNA primase DnaG.